We begin with the raw amino-acid sequence, 110 residues long: UPF0060 membrane protein Ajs_2087 (110 aa).

The next 4 helical transmembrane spans lie at 7–27, 33–53, 63–83, and 86–106; these read LALF…PWLW, SAWL…LLTL, AAYG…VDGV, and GPWD…IAFA.

The protein belongs to the UPF0060 family.

It is found in the cell inner membrane. The sequence is that of UPF0060 membrane protein Ajs_2087 from Acidovorax sp. (strain JS42).